Here is a 175-residue protein sequence, read N- to C-terminus: MKVMERWFNVGKIVNTHGIRGEVRVISRTDFPEERYKKGNKLYIFRECDTEPIEVTVKSHRVHKSFDLLSFEGYDSINDVEPFKGAMLKVPESQLGELNEGEYYFHEIIDCTVVTEAGETIGKVKEILTPGANDVWVVRRQDGTDALIPYIDDVVMHVDPERKIIIIRPMEGLLE.

In terms of domain architecture, PRC barrel spans 100 to 173 (EGEYYFHEII…IIIIRPMEGL (74 aa)).

The protein belongs to the RimM family. In terms of assembly, binds ribosomal protein uS19.

The protein localises to the cytoplasm. In terms of biological role, an accessory protein needed during the final step in the assembly of 30S ribosomal subunit, possibly for assembly of the head region. Essential for efficient processing of 16S rRNA. May be needed both before and after RbfA during the maturation of 16S rRNA. It has affinity for free ribosomal 30S subunits but not for 70S ribosomes. In Geobacillus thermodenitrificans (strain NG80-2), this protein is Ribosome maturation factor RimM.